The primary structure comprises 416 residues: Fusaric acid cluster transcription factor FUB10 (416 aa).

The zn(2)-C6 fungal-type DNA-binding region spans 16–47 (CDRCRAQKLRCHRDSGHSTDACLRCLKSGIEC). Residues 50-92 (SKARPTGRPPSRQVQPTVSVEQGDTSSSSHTTDSSPSAGGTDI) are disordered. Residues 61-73 (RQVQPTVSVEQGD) are compositionally biased toward polar residues. Over residues 74–86 (TSSSSHTTDSSPS) the composition is skewed to low complexity.

The protein localises to the nucleus. Functionally, transcription factor that regulates the expression of the gene cluster that mediates the biosynthesis of fusaric acid, a mycotoxin with low to moderate toxicity to animals and humans, but with high phytotoxic properties. The protein is Fusaric acid cluster transcription factor FUB10 of Fusarium oxysporum f. sp. lycopersici (strain 4287 / CBS 123668 / FGSC 9935 / NRRL 34936) (Fusarium vascular wilt of tomato).